The sequence spans 321 residues: DNA packaging protein (321 aa).

An ATPase region spans residues 1–196 (MLSYDRILNF…DERRKTKFGQ (196 aa)). An ATP-binding site is contributed by 13 to 20 (GARGIGKS). Positions 222–321 (KRSKNSKFVF…YEMFKKMRVQ (100 aa)) are DNA-binding.

Belongs to the phi29likevirus gp16 family. Homopentamer. Interacts with the packaging RNA (pRNA). Part of a DNA-gp3-gp16 complex.

It carries out the reaction ATP + H2O = ADP + phosphate + H(+). Its function is as follows. ATPase required for the genome encapsidation reaction. Part of the active packaging motor via the binding to the packaging RNA (pRNA), itself fixed to the head-tail connector at the unique portal vertex of the prohead. Binds and supercoils the pre-formed, unit-length DNA bound to gp3 to produce an initiation complex for DNA packaging. Provides the energy to actively pump the viral DNA into the prohead. Approximately one molecule of ATP is used in the packaging of 2 bp of viral DNA. ATP hydrolysis results in a conformational change that causes the arginine/lysine finger of one subunit to move into the active site of its neighbor, where it interacts with the negatively charged oxygens on the gamma-phosphate of ATP. After packaging, the ATPase and the pRNA are released from the prohead. The sequence is that of DNA packaging protein (16) from Bacillus subtilis (Bacteriophage B103).